Reading from the N-terminus, the 283-residue chain is Putative casein kinase II subunit beta-4 (283 aa).

2 disordered regions span residues 1 to 23 (MYKDRSGGGIMGGGGSSRSEILG) and 35 to 92 (LDKH…SEGD). Residues 7–16 (GGGIMGGGGS) are compositionally biased toward gly residues. Positions 58-70 (VPSTSTAKSQLHS) are enriched in polar residues.

This sequence belongs to the casein kinase 2 subunit beta family. In terms of assembly, heterotetramer of two catalytic alpha subunits and two regulatory beta subunits. Post-translationally, phosphorylated by alpha subunit.

Its subcellular location is the cytoplasm. It is found in the cytosol. Plays a complex role in regulating the basal catalytic activity of the alpha subunit. The tetrameric holoenzyme CK2, composed of two alpha and two beta subunits, phosphorylates the transcription factor PIF1 after an exposure to light, resulting in a proteasome-dependent degradation of PIF1 and promotion of photomorphogenesis. CK2 phosphorylates translation initiation factors. May participate in the regulation of the initiation of translation. The polypeptide is Putative casein kinase II subunit beta-4 (Arabidopsis thaliana (Mouse-ear cress)).